The primary structure comprises 72 residues: Large ribosomal subunit protein bL31 (72 aa).

This sequence belongs to the bacterial ribosomal protein bL31 family. Type A subfamily. In terms of assembly, part of the 50S ribosomal subunit.

Functionally, binds the 23S rRNA. In Rhodospirillum rubrum (strain ATCC 11170 / ATH 1.1.1 / DSM 467 / LMG 4362 / NCIMB 8255 / S1), this protein is Large ribosomal subunit protein bL31.